The following is a 510-amino-acid chain: Cobyric acid synthase (510 aa).

The 199-residue stretch at 262–460 (EIKVGIIKLP…IHGIFENDEW (199 aa)) folds into the GATase cobBQ-type domain. Catalysis depends on C343, which acts as the Nucleophile. H452 is an active-site residue.

Belongs to the CobB/CobQ family. CobQ subfamily.

Its pathway is cofactor biosynthesis; adenosylcobalamin biosynthesis. Catalyzes amidations at positions B, D, E, and G on adenosylcobyrinic A,C-diamide. NH(2) groups are provided by glutamine, and one molecule of ATP is hydrogenolyzed for each amidation. The chain is Cobyric acid synthase from Prochlorococcus marinus (strain MIT 9515).